Here is a 666-residue protein sequence, read N- to C-terminus: Enzymatic polyprotein (666 aa).

Asp54 is a catalytic residue. In terms of domain architecture, Reverse transcriptase spans Glu215 to Ile445.

Belongs to the caulimoviridae enzymatic polyprotein family.

The enzyme catalyses DNA(n) + a 2'-deoxyribonucleoside 5'-triphosphate = DNA(n+1) + diphosphate. In terms of biological role, encodes for at least two polypeptides: protease (PR) and reverse transcriptase (RT). The protease processes the polyprotein in cis. Reverse transcriptase is multifunctional enzyme that converts the viral RNA genome into dsDNA in viral cytoplasmic capsids. This enzyme displays a DNA polymerase activity that can copy either DNA or RNA templates, and a ribonuclease H (RNase H) activity that cleaves the RNA strand of RNA-DNA heteroduplexes in a partially processive 3'- to 5'-endonucleasic mode. Neo-synthesized pregenomic RNA (pgRNA) are encapsidated, and reverse-transcribed inside the nucleocapsid. Partial (+)DNA is synthesized from the (-)DNA template and generates the relaxed circular DNA (RC-DNA) genome. After budding and infection, the RC-DNA migrates in the nucleus, and is converted into a plasmid-like covalently closed circular DNA (cccDNA). The sequence is that of Enzymatic polyprotein from Figwort mosaic virus (strain DxS) (FMV).